The chain runs to 284 residues: MSQPEPNPFIIFATVAAIISSAVAYYFFQLSRKNAPVLKPNDFQKFPLIEKTRVSHNTCVYRFGLPRSTDRLGLPIGQHIAIGATINDKEVVRSYTPISTDDELGYFDLLIKAYENGNISRHVESKKIGETIDIRGPKGFFTYTPGMVESFGMIAGGTGITPMYQILTAILRNPEDKTKVSLVYANVTEDDILLKEELNKMAREHPDRFKIYYVLNTPPENWTGGVGFVTPEIMDKHLPKASEATNLLLCGPPPMISAMKKAAVGLGYQKAKPVSKLGDQIFVF.

The helical transmembrane segment at 8-28 threads the bilayer; it reads PFIIFATVAAIISSAVAYYFF. The FAD-binding FR-type domain maps to 41 to 144; that stretch reads NDFQKFPLIE…RGPKGFFTYT (104 aa). Residues 124 to 139 and 150 to 182 each bind FAD; these read ESKK…GPKG and SFGM…KVSL.

This sequence belongs to the flavoprotein pyridine nucleotide cytochrome reductase family. As to quaternary structure, monomer. Component of the 2-(3-amino-3-carboxypropyl)histidine synthase complex composed of DPH1, DPH2, DPH3 and a NADH-dependent reductase, predominantly CBR1. FAD is required as a cofactor.

The protein resides in the mitochondrion outer membrane. It carries out the reaction 2 Fe(III)-[cytochrome b5] + NADH = 2 Fe(II)-[cytochrome b5] + NAD(+) + H(+). The catalysed reaction is 2 Fe(3+)-[Dph3] + NADH = 2 Fe(2+)-[Dph3] + NAD(+) + H(+). Its pathway is protein modification; peptidyl-diphthamide biosynthesis. In terms of biological role, NADH-dependent reductase for DPH3 and cytochrome b5. Required for the first step of diphthamide biosynthesis, a post-translational modification of histidine which occurs in elongation factor 2. DPH1 and DPH2 transfer a 3-amino-3-carboxypropyl (ACP) group from S-adenosyl-L-methionine (SAM) to a histidine residue, the reaction is assisted by a reduction system comprising DPH3 and a NADH-dependent reductase, predominantly CBR1. By reducing DPH3, also involved in the formation of the tRNA wobble base modification mcm5s 2U (5-methoxycarbonylmethyl-2-thiouridine), mediated by the elongator complex. The cytochrome b5/NADH cytochrome b5 reductase electron transfer system supports the catalytic activity of several sterol biosynthetic enzymes. The chain is NADH-cytochrome b5 reductase 1 (CBR1) from Debaryomyces hansenii (strain ATCC 36239 / CBS 767 / BCRC 21394 / JCM 1990 / NBRC 0083 / IGC 2968) (Yeast).